Consider the following 951-residue polypeptide: Serine/threonine-protein phosphatase 4 regulatory subunit 1 (951 aa).

HEAT repeat units lie at residues 26–63 (ESDV…VFNR), 82–119 (RDCI…FCQE), 127–164 (AFSK…QELI), 168–206 (DVET…MVGK), 208–246 (ITER…VVGQ), 248–285 (ATEE…ATCQ), and 287–324 (IRRT…TFAN). Disordered regions lie at residues 326–395 (SSSG…DMRV), 407–501 (SESP…MATR), 539–569 (HDEA…SISE), and 592–612 (GGAD…ERRP). Composition is skewed to basic and acidic residues over residues 332–360 (FKDE…RPED), 464–483 (DLDK…ERTG), and 539–551 (HDEA…RSEL). Residues 502–539 (KELEEMIENLEPHMDDPDVKAQVEVLSAALRASTLDAH) form an HEAT 8 repeat. The segment covering 594 to 604 (ADVGPGGGGGF) has biased composition (gly residues). HEAT repeat units follow at residues 699 to 735 (LTAA…LLHI), 777 to 815 (RDVY…KLHM), 820 to 858 (TFGV…DDCL), and 862 to 899 (QFAV…EKEY). Phosphoserine is present on Ser936.

As to quaternary structure, serine/threonine-protein phosphatase 4 (PP4) occurs in different assemblies of the catalytic and one or more regulatory subunits. Component of the PP4 complex PPP4C-PPP4R1. Interacts with HDAC3.

In terms of biological role, regulatory subunit of serine/threonine-protein phosphatase 4. May play a role in regulation of cell division in renal glomeruli. The PPP4C-PPP4R1 PP4 complex may play a role in dephosphorylation and regulation of HDAC3. Plays a role in the inhibition of TNF-induced NF-kappa-B activation by regulating the dephosphorylation of TRAF2. The sequence is that of Serine/threonine-protein phosphatase 4 regulatory subunit 1 (Ppp4r1) from Rattus norvegicus (Rat).